The primary structure comprises 167 residues: Endoribonuclease YbeY (167 aa).

Residues H125, H129, and H135 each coordinate Zn(2+).

It belongs to the endoribonuclease YbeY family. Zn(2+) serves as cofactor.

The protein resides in the cytoplasm. Its function is as follows. Single strand-specific metallo-endoribonuclease involved in late-stage 70S ribosome quality control and in maturation of the 3' terminus of the 16S rRNA. The protein is Endoribonuclease YbeY of Allorhizobium ampelinum (strain ATCC BAA-846 / DSM 112012 / S4) (Agrobacterium vitis (strain S4)).